Here is a 238-residue protein sequence, read N- to C-terminus: Peroxisomal coenzyme A diphosphatase NUDT7 (238 aa).

At Lys20 the chain carries N6-succinyllysine. The 136-residue stretch at 37-172 (YNKYSVLLPL…VTRLGHRFIN (136 aa)) folds into the Nudix hydrolase domain. Residues 77 to 98 (KRDPTDMDDAATALREAQEEVG) carry the Nudix box motif. Positions 92 and 96 each coordinate Mg(2+). A Microbody targeting signal motif is present at residues 236–238 (SRL).

The protein belongs to the Nudix hydrolase family. PCD1 subfamily. Monomer. It depends on Mn(2+) as a cofactor. Mg(2+) serves as cofactor. In terms of tissue distribution, expressed in liver, kidney, pancreas, pituitary, small intestine, spleen, heart and placenta. Weakly expressed in brain.

The protein resides in the peroxisome. It carries out the reaction hexanoyl-CoA + H2O = hexanoyl-4'-phosphopantetheine + adenosine 3',5'-bisphosphate + 2 H(+). The enzyme catalyses octanoyl-CoA + H2O = S-octanoyl-4'-phosphopantetheine + adenosine 3',5'-bisphosphate + 2 H(+). The catalysed reaction is butanoyl-CoA + H2O = S-butanoyl-4'-phosphopantetheine + adenosine 3',5'-bisphosphate + 2 H(+). It catalyses the reaction decanoyl-CoA + H2O = decanoyl-4'-phosphopantetheine + adenosine 3',5'-bisphosphate + 2 H(+). It carries out the reaction dodecanoyl-CoA + H2O = S-dodecanoyl-4'-phosphopantetheine + adenosine 3',5'-bisphosphate + 2 H(+). The enzyme catalyses tetradecanoyl-CoA + H2O = tetradecanoyl-4'-phosphopantetheine + adenosine 3',5'-bisphosphate + 2 H(+). The catalysed reaction is choloyl-CoA + H2O = S-choloyl-4'-phosphopantetheine + adenosine 3',5'-bisphosphate + 2 H(+). It catalyses the reaction 3alpha,7alpha,12alpha-trihydroxy-5beta-cholestan-26-oyl-CoA + H2O = 3alpha,7alpha,12alpha-trihydroxy-5beta-cholestan-26-oyl-4'-phosphopantetheine + adenosine 3',5'-bisphosphate + 2 H(+). It carries out the reaction acetyl-CoA + H2O = S-acetyl-4'-phosphopantetheine + adenosine 3',5'-bisphosphate + 2 H(+). The enzyme catalyses CoA + H2O = (R)-4'-phosphopantetheine + adenosine 3',5'-bisphosphate + 2 H(+). The catalysed reaction is propanoyl-CoA + H2O = propanoyl-4'-phosphopantetheine + adenosine 3',5'-bisphosphate + 2 H(+). It catalyses the reaction malonyl-CoA + H2O = malonyl-4'-phosphopantetheine + adenosine 3',5'-bisphosphate + 2 H(+). It carries out the reaction succinyl-CoA + H2O = succinyl-4'-phosphopantetheine + adenosine 3',5'-bisphosphate + 2 H(+). The enzyme catalyses a 5'-end CoA-ribonucleoside in mRNA + H2O = a 5'-end phospho-adenosine-phospho-ribonucleoside in mRNA + (R)-4'-phosphopantetheine + 2 H(+). Its activity is regulated as follows. Inhibited by fluoride. Fatty acyl-coenzyme A (CoA) diphosphatase that hydrolyzes fatty acyl-CoA to yield acyl-4'-phosphopantetheine and adenosine 3',5'-bisphosphate. Cleaves CoA, CoA esters and oxidized CoA with similar efficiencies. Preferentially hydrolyzes medium-chain acyl-CoAs and bile acid-CoAs. Has no activity toward NDP-sugars, CDP-alcohols, (deoxy)nucleoside 5'-triphosphates, nucleoside 5'-di or monophosphates, diadenosine polyphosphates, NAD, NADH, NADP, NADPH or thymidine-5'-monophospho-p-nitrophenyl ester. May be required to eliminate oxidized CoA from peroxisomes, or regulate CoA and acyl-CoA levels in this organelle in response to metabolic demand. Does not play a role in U8 snoRNA decapping activity. Binds U8 snoRNA. Exhibits decapping activity towards dpCoA-capped RNAs in vitro. The sequence is that of Peroxisomal coenzyme A diphosphatase NUDT7 from Homo sapiens (Human).